The primary structure comprises 615 residues: DNA mismatch repair protein MutL (615 aa).

The disordered stretch occupies residues 362-397 (HFAEPAVREPVAPRYTPAPASGSRPAAPWPNAQPGY). A compositionally biased stretch (low complexity) spans 378–391 (PAPASGSRPAAPWP).

Belongs to the DNA mismatch repair MutL/HexB family.

In terms of biological role, this protein is involved in the repair of mismatches in DNA. It is required for dam-dependent methyl-directed DNA mismatch repair. May act as a 'molecular matchmaker', a protein that promotes the formation of a stable complex between two or more DNA-binding proteins in an ATP-dependent manner without itself being part of a final effector complex. This chain is DNA mismatch repair protein MutL, found in Escherichia coli O17:K52:H18 (strain UMN026 / ExPEC).